The following is an 870-amino-acid chain: Patatin-like phospholipase domain-containing protein NCU11180 (870 aa).

Disordered stretches follow at residues 1-24 (MADDTDNPPNIQIPAKSYGFPPEA) and 131-158 (KVIKTDRDEKRNKRGKDRKNKKPRKGVA). Basic and acidic residues predominate over residues 131–141 (KVIKTDRDEKR). The span at 142–155 (NKRGKDRKNKKPRK) shows a compositional bias: basic residues. Residues 183–203 (WPFLLFVSFWIVGLGMAYLAT) form a helical membrane-spanning segment. The segment at 281 to 320 (EEVERELESQSQNSDSGVASGEETSNTKAGGGNNGNDKKT) is disordered. Residues 289-308 (SQSQNSDSGVASGEETSNTK) are compositionally biased toward polar residues. Residues 399–590 (LCLSGGATFA…RTDIPIKSLN (192 aa)) enclose the PNPLA domain. A GXSXG motif is present at residues 430–434 (GTSGG). Ser-432 serves as the catalytic Nucleophile. The active-site Proton acceptor is the Asp-577. 2 disordered regions span residues 735–786 (RRET…DRRG) and 804–870 (GREG…HSRT). The segment covering 818 to 834 (TEDELTMTELEGEDDDG) has biased composition (acidic residues).

This sequence belongs to the PLPL family.

It is found in the membrane. In terms of biological role, probable lipid hydrolase. The polypeptide is Patatin-like phospholipase domain-containing protein NCU11180 (Neurospora crassa (strain ATCC 24698 / 74-OR23-1A / CBS 708.71 / DSM 1257 / FGSC 987)).